The following is a 436-amino-acid chain: Adenylosuccinate synthetase (436 aa).

GTP is bound by residues 13 to 19 and 41 to 43; these read GDEGKGK and GHT. Asp-14 (proton acceptor) is an active-site residue. Mg(2+)-binding residues include Asp-14 and Gly-41. IMP contacts are provided by residues 14-17, 39-42, Thr-130, Arg-144, Gln-225, Thr-240, and Arg-304; these read DEGK and NAGH. The active-site Proton donor is His-42. 300-306 contributes to the substrate binding site; that stretch reads ATTGRSR. Residues Arg-306, 332–334, and 415–417 contribute to the GTP site; these read KLD and STG.

Belongs to the adenylosuccinate synthetase family. As to quaternary structure, homodimer. It depends on Mg(2+) as a cofactor.

The protein localises to the cytoplasm. It carries out the reaction IMP + L-aspartate + GTP = N(6)-(1,2-dicarboxyethyl)-AMP + GDP + phosphate + 2 H(+). It functions in the pathway purine metabolism; AMP biosynthesis via de novo pathway; AMP from IMP: step 1/2. Its function is as follows. Plays an important role in the de novo pathway of purine nucleotide biosynthesis. Catalyzes the first committed step in the biosynthesis of AMP from IMP. The polypeptide is Adenylosuccinate synthetase (Hamiltonella defensa subsp. Acyrthosiphon pisum (strain 5AT)).